A 343-amino-acid polypeptide reads, in one-letter code: Glycogen biosynthesis protein GlgD (343 aa).

This sequence belongs to the bacterial/plant glucose-1-phosphate adenylyltransferase family.

Its function is as follows. Required for the synthesis of glycogen. The sequence is that of Glycogen biosynthesis protein GlgD (glgD) from Geobacillus stearothermophilus (Bacillus stearothermophilus).